A 351-amino-acid chain; its full sequence is Spermidine/putrescine import ATP-binding protein PotA (351 aa).

In terms of domain architecture, ABC transporter spans 6 to 236 (LELRNVTKEY…PENAWVANFI (231 aa)). ATP is bound at residue 38–45 (GPSGCGKT).

It belongs to the ABC transporter superfamily. Spermidine/putrescine importer (TC 3.A.1.11.1) family. As to quaternary structure, the complex is composed of two ATP-binding proteins (PotA), two transmembrane proteins (PotB and PotC) and a solute-binding protein (PotD).

It localises to the cell membrane. The catalysed reaction is ATP + H2O + polyamine-[polyamine-binding protein]Side 1 = ADP + phosphate + polyamineSide 2 + [polyamine-binding protein]Side 1.. Its function is as follows. Part of the ABC transporter complex PotABCD involved in spermidine/putrescine import. Responsible for energy coupling to the transport system. This is Spermidine/putrescine import ATP-binding protein PotA from Mycoplasma mycoides subsp. mycoides SC (strain CCUG 32753 / NCTC 10114 / PG1).